Reading from the N-terminus, the 80-residue chain is Dolichol-phosphate mannose synthase subunit 2 (80 aa).

Transmembrane regions (helical) follow at residues 10 to 30 (LLLS…VIIL) and 50 to 70 (ILVP…FIGM).

This sequence belongs to the DPM2 family. As to quaternary structure, component of the dolichol-phosphate mannose (DPM) synthase complex composed of DPMS1, DPMS2 and DPMS3; in the complex interacts directly with DPMS3. Associates with the GPI-GlcNAc transferase (GPI-GnT) complex.

It is found in the endoplasmic reticulum membrane. It participates in protein modification; protein glycosylation. In terms of biological role, regulates the biosynthesis of dolichol phosphate-mannose. Regulatory subunit of the dolichol-phosphate mannose (DPM) synthase complex; essential for the ER localization and stable expression of DPMS1. The sequence is that of Dolichol-phosphate mannose synthase subunit 2 from Arabidopsis thaliana (Mouse-ear cress).